The primary structure comprises 489 residues: UDP-N-acetylmuramoylalanine--D-glutamate ligase (489 aa).

Position 126 to 132 (126 to 132 (GTNGKTT)) interacts with ATP.

It belongs to the MurCDEF family.

It localises to the cytoplasm. The enzyme catalyses UDP-N-acetyl-alpha-D-muramoyl-L-alanine + D-glutamate + ATP = UDP-N-acetyl-alpha-D-muramoyl-L-alanyl-D-glutamate + ADP + phosphate + H(+). Its pathway is cell wall biogenesis; peptidoglycan biosynthesis. Its function is as follows. Cell wall formation. Catalyzes the addition of glutamate to the nucleotide precursor UDP-N-acetylmuramoyl-L-alanine (UMA). The chain is UDP-N-acetylmuramoylalanine--D-glutamate ligase from Mycolicibacterium paratuberculosis (strain ATCC BAA-968 / K-10) (Mycobacterium paratuberculosis).